Reading from the N-terminus, the 359-residue chain is MILNSSTEDSIKRIQDDCPKAGRHNYIFVMIPTLYSIIFVVGIFGNSLVVIVIYFYMKLKTVASVFLLNLALADLCFLLTLPLWAVYTAMEYRWPFGNYLCKIASASVSFNLYASVFLLTCLSIDRYLAIVHPMKSRLRRTMLVAKVTCIIIWLLAGLASLPTIIHRNVFFIENTNITVCAFHYESQNSTLPVGLGLTKNILGFLFPFLIILTSYTLIWKALKKAYEIQKNKPRNDDIFKIIMAIVLFFFFSWVPHQIFTFLDVLIQLGIIHDCKIADIVDTAMPITICLAYFNNCLNPLFYGFLGKKFKKYFLQLLKYIPPKAKSHSSLSTKMSTLSYRPSENGSSSTKKSAPCTEVE.

At 1–25 (MILNSSTEDSIKRIQDDCPKAGRHN) the chain is on the extracellular side. Asparagine 4 is a glycosylation site (N-linked (GlcNAc...) asparagine). 2 residues coordinate angiotensin II: glutamine 15 and aspartate 17. Disulfide bonds link cysteine 18-cysteine 274 and cysteine 101-cysteine 180. A helical membrane pass occupies residues 26–55 (YIFVMIPTLYSIIFVVGIFGNSLVVIVIYF). Residues 56 to 61 (YMKLKT) are Cytoplasmic-facing. Residues 62–89 (VASVFLLNLALADLCFLLTLPLWAVYTA) form a helical membrane-spanning segment. Over 90–98 (MEYRWPFGN) the chain is Extracellular. A helical membrane pass occupies residues 99–125 (YLCKIASASVSFNLYASVFLLTCLSID). Residues 126–141 (RYLAIVHPMKSRLRRT) are Cytoplasmic-facing. A helical transmembrane segment spans residues 142 to 165 (MLVAKVTCIIIWLLAGLASLPTII). The Extracellular portion of the chain corresponds to 166-190 (HRNVFFIENTNITVCAFHYESQNST). Arginine 167 contributes to the angiotensin II binding site. An N-linked (GlcNAc...) asparagine glycan is attached at asparagine 176. Residues phenylalanine 182, histidine 183, and tyrosine 184 each contribute to the angiotensin II site. An N-linked (GlcNAc...) asparagine glycan is attached at asparagine 188. A helical membrane pass occupies residues 191–216 (LPVGLGLTKNILGFLFPFLIILTSYT). Residue lysine 199 coordinates angiotensin II. Residues 217-239 (LIWKALKKAYEIQKNKPRNDDIF) lie on the Cytoplasmic side of the membrane. The helical transmembrane segment at 240–268 (KIIMAIVLFFFFSWVPHQIFTFLDVLIQL) threads the bilayer. Residues 269–278 (GIIHDCKIAD) lie on the Extracellular side of the membrane. The helical transmembrane segment at 279 to 304 (IVDTAMPITICLAYFNNCLNPLFYGF) threads the bilayer. At 305–359 (LGKKFKKYFLQLLKYIPPKAKSHSSLSTKMSTLSYRPSENGSSSTKKSAPCTEVE) the chain is on the cytoplasmic side. Residues 326 to 359 (SHSSLSTKMSTLSYRPSENGSSSTKKSAPCTEVE) are disordered. Residues 327–351 (HSSLSTKMSTLSYRPSENGSSSTKK) show a composition bias toward polar residues. Cysteine 355 carries S-palmitoyl cysteine lipidation.

This sequence belongs to the G-protein coupled receptor 1 family. As to quaternary structure, interacts with MAS1. Interacts with ARRB1. Interacts with FLNA (via filamin repeat 21); increases PKA-mediated phosphorylation of FLNA. C-terminal Ser or Thr residues may be phosphorylated.

It localises to the cell membrane. Its function is as follows. Receptor for angiotensin II, a vasoconstricting peptide, which acts as a key regulator of blood pressure and sodium retention by the kidney. The activated receptor in turn couples to G-alpha proteins G(q) (GNAQ, GNA11, GNA14 or GNA15) and thus activates phospholipase C and increases the cytosolic Ca(2+) concentrations, which in turn triggers cellular responses such as stimulation of protein kinase C. In Sus scrofa (Pig), this protein is Type-1 angiotensin II receptor (AGTR1).